We begin with the raw amino-acid sequence, 256 residues long: Small ribosomal subunit protein eS1 (256 aa).

Residues 1 to 18 are compositionally biased toward basic residues; sequence MAVGKNKRLSKGKKGLKK. A disordered region spans residues 1 to 20; sequence MAVGKNKRLSKGKKGLKKKA. Residue alanine 2 is modified to N-acetylalanine; partial.

It belongs to the eukaryotic ribosomal protein eS1 family. Component of the small ribosomal subunit. Mature ribosomes consist of a small (40S) and a large (60S) subunit. The 40S subunit contains about 33 different proteins and 1 molecule of RNA (18S). The 60S subunit contains about 49 different proteins and 3 molecules of RNA (25S, 5.8S and 5S).

The protein resides in the cytoplasm. This chain is Small ribosomal subunit protein eS1, found in Chaetomium globosum (strain ATCC 6205 / CBS 148.51 / DSM 1962 / NBRC 6347 / NRRL 1970) (Soil fungus).